The chain runs to 1464 residues: Neuropathy target esterase sws (1464 aa).

At 1 to 34 (MDVLELLRASATGCYNTIFSEAWHQYVHKQIAAA) the chain is on the lumenal side. Residues 35–55 (VYWYGALFLLGVLLFVWFLYF) form a helical membrane-spanning segment. The Cytoplasmic segment spans residues 56-1464 (KRLARLRLRD…GNTTNNDTKN (1409 aa)). An a nucleoside 3',5'-cyclic phosphate-binding site is contributed by 176-303 (IFGHFEKPIF…IRVIQVIMIR (128 aa)). Disordered regions lie at residues 329–393 (NKNS…LHYH) and 409–438 (QQQQSLNSPRRNSTAHVSEAAAASTASSPT). Residues 338 to 367 (TGQTTSNVQSQTSQATQSRPSGTTRTPTSP) are compositionally biased toward low complexity. The segment covering 409 to 420 (QQQQSLNSPRRN) has biased composition (polar residues). Ser-421 is modified (phosphoserine). Over residues 422–438 (TAHVSEAAAASTASSPT) the composition is skewed to low complexity. A nucleoside 3',5'-cyclic phosphate-binding positions include 456–586 (ELGL…VVRR) and 575–702 (IVLG…LSHR). Residues 928–1094 (LVLGGGGARG…VNNLPGHLWR (167 aa)) form the PNPLA domain. The GXGXXG motif lies at 932–937 (GGGARG). The GXSXG motif lies at 959–963 (GVSIG). Ser-961 acts as the Nucleophile in catalysis. Asp-1081 functions as the Proton acceptor in the catalytic mechanism. A DGA/G motif is present at residues 1081–1083 (DGG). Ser-1175 is subject to Phosphoserine. Disordered regions lie at residues 1352 to 1374 (VDKATQSTPTLPDKRSVQTPTPS) and 1400 to 1464 (ATNT…DTKN). Residues 1429 to 1444 (KRTEQDEHELEHEQVV) show a composition bias toward basic and acidic residues. Residues 1450–1464 (MDKQQGNTTNNDTKN) show a composition bias toward polar residues.

This sequence belongs to the NTE family. As to quaternary structure, interacts with Pka-C3; interaction inhibits the catalytic function of Pka-C3 and the esterase activity of sws.

It is found in the endoplasmic reticulum membrane. The catalysed reaction is a 1-acyl-sn-glycero-3-phosphocholine + H2O = sn-glycerol 3-phosphocholine + a fatty acid + H(+). Functionally, phospholipase B that deacylates intracellular phosphatidylcholine (PtdCho), generating glycerophosphocholine (GroPtdCho). This deacylation occurs at both sn-2 and sn-1 positions of PtdCho. Its specific chemical modification by certain organophosphorus (OP) compounds leads to distal axonopathy. Plays a role in the signaling mechanism between neurons and glia that regulates glia wrapping during development of the adult brain. Essential for membrane lipid homeostasis and cell survival in both neurons and glia of the adult brain. In Drosophila grimshawi (Hawaiian fruit fly), this protein is Neuropathy target esterase sws.